The sequence spans 32 residues: Growth hormone-related protein 4 (32 aa).

An intrachain disulfide couples Cys-4 to Cys-11.

This sequence belongs to the somatotropin/prolactin family. In terms of processing, glycosylated. In terms of tissue distribution, placental basal zone cells.

Its subcellular location is the secreted. This Rattus norvegicus (Rat) protein is Growth hormone-related protein 4.